A 328-amino-acid polypeptide reads, in one-letter code: D-cysteine desulfhydrase (328 aa).

Lysine 51 is modified (N6-(pyridoxal phosphate)lysine).

It belongs to the ACC deaminase/D-cysteine desulfhydrase family. In terms of assembly, homodimer. Pyridoxal 5'-phosphate serves as cofactor.

The enzyme catalyses D-cysteine + H2O = hydrogen sulfide + pyruvate + NH4(+) + H(+). Catalyzes the alpha,beta-elimination reaction of D-cysteine and of several D-cysteine derivatives. It could be a defense mechanism against D-cysteine. This chain is D-cysteine desulfhydrase, found in Escherichia coli (strain SMS-3-5 / SECEC).